The chain runs to 105 residues: Large ribosomal subunit protein bL21 (105 aa).

The protein belongs to the bacterial ribosomal protein bL21 family. Part of the 50S ribosomal subunit. Contacts protein L20.

In terms of biological role, this protein binds to 23S rRNA in the presence of protein L20. The polypeptide is Large ribosomal subunit protein bL21 (Parafrankia sp. (strain EAN1pec)).